A 180-amino-acid chain; its full sequence is Large ribosomal subunit protein uL5 (180 aa).

Belongs to the universal ribosomal protein uL5 family. Part of the 50S ribosomal subunit; part of the 5S rRNA/L5/L18/L25 subcomplex. Contacts the 5S rRNA and the P site tRNA. Forms a bridge to the 30S subunit in the 70S ribosome.

Its function is as follows. This is one of the proteins that bind and probably mediate the attachment of the 5S RNA into the large ribosomal subunit, where it forms part of the central protuberance. In the 70S ribosome it contacts protein S13 of the 30S subunit (bridge B1b), connecting the 2 subunits; this bridge is implicated in subunit movement. Contacts the P site tRNA; the 5S rRNA and some of its associated proteins might help stabilize positioning of ribosome-bound tRNAs. This chain is Large ribosomal subunit protein uL5, found in Streptococcus pyogenes serotype M1.